Here is a 169-residue protein sequence, read N- to C-terminus: Nucleoside diphosphate kinase 3 (169 aa).

ADP-binding residues include lysine 29, arginine 105, threonine 111, arginine 122, valine 129, and asparagine 132. Histidine 135 functions as the Pros-phosphohistidine intermediate in the catalytic mechanism.

Belongs to the NDK family. Homohexamer. Interacts (via its N-terminal region) with KAT5; this interaction enables recruitment of NME3 at DNA damage sites where it plays a role in the repair of DNA. Found in association with several ciliary nephronophthisis proteins, including NEK8, CEP164, ANKS6. Requires Mg(2+) as cofactor.

The protein resides in the mitochondrion outer membrane. It is found in the cytoplasm. Its subcellular location is the cytoskeleton. The protein localises to the cilium basal body. The enzyme catalyses a 2'-deoxyribonucleoside 5'-diphosphate + ATP = a 2'-deoxyribonucleoside 5'-triphosphate + ADP. It catalyses the reaction a ribonucleoside 5'-diphosphate + ATP = a ribonucleoside 5'-triphosphate + ADP. Its function is as follows. Catalyzes the phosphorylation of ribonucleosides and deoxyribonucleoside diphosphates, other than ATP, into the corresponding triphosphates with ATP as the major phosphate donor. The ATP gamma phosphate is transferred to the nucleoside diphosphate beta phosphate via a ping-pong mechanism, using a phosphorylated active-site intermediate. Through the catalyzed exchange of gamma-phosphate between di- and triphosphonucleosides participates in regulation of intracellular nucleotide homeostasis. Inhibits granulocyte differentiation. May be required for ciliary function during renal development. In terms of biological role, independently of its kinase activity, facilitates mitochondrial tethering prior to membrane fusion through its direct membrane-binding and hexamerization. Implicated in repair of both single- and double-stranded breaks in DNA through its association with the ribonucleotide reductase complex (RNR complex) via its interaction with the histone acetyltransferase KAT5, this interaction enables recruitment of NME3 at DNA damage sites where it plays a role in the repair of DNA, independently of its kinase activity. The protein is Nucleoside diphosphate kinase 3 of Homo sapiens (Human).